We begin with the raw amino-acid sequence, 543 residues long: CTP synthase (543 aa).

An amidoligase domain region spans residues 1-267 (MKQTKYIFVT…LSPIAEILDL (267 aa)). CTP is bound at residue S15. Position 15 (S15) interacts with UTP. Residues 16 to 21 (SLGKGI) and D73 contribute to the ATP site. Mg(2+) is bound by residues D73 and E141. CTP is bound by residues 148–150 (DIE), 188–193 (KTKPTQ), and K224. UTP contacts are provided by residues 188-193 (KTKPTQ) and K224. The 252-residue stretch at 292–543 (KIAFVGKYVD…IKAAINYEDN (252 aa)) folds into the Glutamine amidotransferase type-1 domain. G354 is a binding site for L-glutamine. Residue C381 is the Nucleophile; for glutamine hydrolysis of the active site. Residues 382-385 (LGMQ), E405, and R473 each bind L-glutamine. Active-site residues include H516 and E518.

Belongs to the CTP synthase family. As to quaternary structure, homotetramer.

It carries out the reaction UTP + L-glutamine + ATP + H2O = CTP + L-glutamate + ADP + phosphate + 2 H(+). The enzyme catalyses L-glutamine + H2O = L-glutamate + NH4(+). The catalysed reaction is UTP + NH4(+) + ATP = CTP + ADP + phosphate + 2 H(+). It functions in the pathway pyrimidine metabolism; CTP biosynthesis via de novo pathway; CTP from UDP: step 2/2. With respect to regulation, allosterically activated by GTP, when glutamine is the substrate; GTP has no effect on the reaction when ammonia is the substrate. The allosteric effector GTP functions by stabilizing the protein conformation that binds the tetrahedral intermediate(s) formed during glutamine hydrolysis. Inhibited by the product CTP, via allosteric rather than competitive inhibition. Functionally, catalyzes the ATP-dependent amination of UTP to CTP with either L-glutamine or ammonia as the source of nitrogen. Regulates intracellular CTP levels through interactions with the four ribonucleotide triphosphates. This is CTP synthase from Campylobacter jejuni subsp. jejuni serotype O:23/36 (strain 81-176).